We begin with the raw amino-acid sequence, 805 residues long: Chloride channel protein (805 aa).

Residues 1-48 are Cytoplasmic-facing; sequence MSHEKNEASGYPEAQSWKSQEAMLGARTEVSRWRAVKNCLYRHLVKVL. 2 helical membrane passes run 49–86 and 93–116; these read GEDW…LFAL and LQYL…CQIV. The short motif at 122–126 is the Selectivity filter part_1 element; sequence GSGIP. Ser-123 contributes to the chloride binding site. Residues 125 to 132 constitute an intramembrane region (helical); it reads IPELKTII. 2 helical membrane passes run 141-159 and 166-184; these read LTLR…ALSA and EGPF…NQLL. The Selectivity filter part_2 motif lies at 164–168; the sequence is GKEGP. 2 intramembrane regions (helical) span residues 201–213 and 217–225; these read ILTV…ISCC and PLAGVLFSI. Transmembrane regions (helical) follow at residues 237 to 256, 283 to 311, and 320 to 339; these read YWRG…VLSV, MPAF…IVFM, and ILKK…LATL. The N-linked (GlcNAc...) asparagine glycan is linked to Asn-365. 2 helical membrane-spanning segments follow: residues 388 to 408 and 416 to 439; these read LNIF…AALA and GAFV…MALL. The Selectivity filter part_3 signature appears at 416–420; that stretch reads GAFVP. Phe-418 contributes to the chloride binding site. Residues 456-470 constitute an intramembrane region (helical); that stretch reads GEYAVIGAAAMTGAV. The segment at residues 471–472 is an intramembrane region (note=Loop between two helices); sequence TH. The segment at residues 473–484 is an intramembrane region (helical); it reads AVSTAVICFELT. An intramembrane region (note=Loop between two helices) is located at residues 485 to 489; it reads GQISH. A helical transmembrane segment spans residues 490–507; sequence VLPMMVAVILANMVAQGL. Topologically, residues 508-805 are cytoplasmic; sequence QPSLYDSIIQ…RTATSNSSGK (298 aa). A chloride-binding site is contributed by Tyr-512. In terms of domain architecture, CBS 1 spans 543–601; that stretch reads MVRDVTSIASTSTYGDLLHVLRQTKLKFFPFVDTPDTNTLLGSIDRTEVEGLLQRRISA. Disordered stretches follow at residues 606 to 625 and 653 to 684; these read PAAA…GASF and KVQT…QKGT. The region spanning 719 to 776 is the CBS 2 domain; that stretch reads IDQSPFQLVEGTSLQKTHTLFSLLGLDRAYVTSMGKLVGVVALAEIQAAIEGSYQKGF.

This sequence belongs to the chloride channel (TC 2.A.49) family. ClC-0 subfamily. As to quaternary structure, homodimer. Each subunit contains a channel ('Double barreled channel').

The protein resides in the membrane. Voltage-gated chloride channel. This channel is thought to ensure the high conductance of the non-innervated membrane of the electrocyte necessary for efficient current generation caused by sodium influx through the acetylcholine receptor at the innervated membrane. In Torpedo marmorata (Marbled electric ray), this protein is Chloride channel protein.